A 165-amino-acid chain; its full sequence is Chorismate pyruvate-lyase (165 aa).

Substrate-binding residues include Met-35, Arg-77, Leu-115, and Glu-156.

It belongs to the UbiC family. Monomer.

It localises to the cytoplasm. It carries out the reaction chorismate = 4-hydroxybenzoate + pyruvate. The protein operates within cofactor biosynthesis; ubiquinone biosynthesis. In terms of biological role, removes the pyruvyl group from chorismate, with concomitant aromatization of the ring, to provide 4-hydroxybenzoate (4HB) for the ubiquinone pathway. The protein is Chorismate pyruvate-lyase of Shigella boydii serotype 18 (strain CDC 3083-94 / BS512).